The primary structure comprises 207 residues: Large ribosomal subunit protein uL4 (207 aa).

Belongs to the universal ribosomal protein uL4 family. In terms of assembly, part of the 50S ribosomal subunit.

Its function is as follows. One of the primary rRNA binding proteins, this protein initially binds near the 5'-end of the 23S rRNA. It is important during the early stages of 50S assembly. It makes multiple contacts with different domains of the 23S rRNA in the assembled 50S subunit and ribosome. Functionally, forms part of the polypeptide exit tunnel. This Pelagibacter ubique (strain HTCC1062) protein is Large ribosomal subunit protein uL4.